The following is a 238-amino-acid chain: MPTFSLWLPAGSNNVHPCGDPYAHHLFMRCLYHAKHDPTMKFDVKTTNVNKTSQEFKNTGLRRMPGISAEESGETQTFETEDDILDFLEYLKPERGDDEEAENATCDLFRQFARFVKDVEHRDTAFNTELLRLDKYLSEQETKFLISDDVTHIDCLVLTRLHSIRVAAKMLKNYEIPADLSHVLDYLKAGYATEMFRVSCPSDQEIVLHWTELKDTPRLSAKDRAKLVREEPVFSFSV.

Belongs to the chloride channel CLIC family. In terms of tissue distribution, expressed in the intestine, neurons and muscles.

It localises to the cytoplasm. It is found in the membrane. Its subcellular location is the lysosome membrane. The protein localises to the golgi apparatus membrane. In terms of biological role, probable chloride channel. The polypeptide is Chloride intracellular channel exl-1 (exl-1) (Caenorhabditis elegans).